The primary structure comprises 290 residues: 4-hydroxy-tetrahydrodipicolinate synthase (290 aa).

Residue T44 coordinates pyruvate. Catalysis depends on Y132, which acts as the Proton donor/acceptor. The active-site Schiff-base intermediate with substrate is the K160. Residue I202 coordinates pyruvate.

This sequence belongs to the DapA family. Homotetramer; dimer of dimers.

It is found in the cytoplasm. The catalysed reaction is L-aspartate 4-semialdehyde + pyruvate = (2S,4S)-4-hydroxy-2,3,4,5-tetrahydrodipicolinate + H2O + H(+). The protein operates within amino-acid biosynthesis; L-lysine biosynthesis via DAP pathway; (S)-tetrahydrodipicolinate from L-aspartate: step 3/4. Functionally, catalyzes the condensation of (S)-aspartate-beta-semialdehyde [(S)-ASA] and pyruvate to 4-hydroxy-tetrahydrodipicolinate (HTPA). The polypeptide is 4-hydroxy-tetrahydrodipicolinate synthase (Geotalea daltonii (strain DSM 22248 / JCM 15807 / FRC-32) (Geobacter daltonii)).